The chain runs to 219 residues: Cytidylate kinase (219 aa).

An ATP-binding site is contributed by 10 to 18; the sequence is GPAAAGKST.

The protein belongs to the cytidylate kinase family. Type 1 subfamily.

Its subcellular location is the cytoplasm. The catalysed reaction is CMP + ATP = CDP + ADP. The enzyme catalyses dCMP + ATP = dCDP + ADP. This chain is Cytidylate kinase, found in Staphylococcus aureus (strain JH9).